The following is a 581-amino-acid chain: MPLKHYLLLLVGCQAWGAGLAYHGCPSECTCSRASQVECTGARIVAVPTPLPWNAMSLQILNTHITELNESPFLNISALIALRIEKNELSRITPGAFRNLGSLRYLSLANNKLQVLPIGLFQGLDSLESLLLSSNQLLQIQPAHFSQCSNLKELQLHGNHLEYIPDGAFDHLVGLTKLNLGKNSLTHISPRVFQHLGNLQVLRLYENRLTDIPMGTFDGLVNLQELALQQNQIGLLSPGLFHNNHNLQRLYLSNNHISQLPPSVFMQLPQLNRLTLFGNSLKELSPGIFGPMPNLRELWLYDNHISSLPDNVFSNLRQLQVLILSRNQISFISPGAFNGLTELRELSLHTNALQDLDGNVFRMLANLQNISLQNNRLRQLPGNIFANVNGLMAIQLQNNQLENLPLGIFDHLGKLCELRLYDNPWRCDSDILPLRNWLLLNQPRLGTDTVPVCFSPANVRGQSLIIINVNVAVPSVHVPEVPSYPETPWYPDTPSYPDTTSVSSTTELTSPVEDYTDLTTIQVTDDRSVWGMTQAQSGLAIAAIVIGIVALACSLAACVGCCCCKKRSQAVLMQMKAPNEC.

The signal sequence occupies residues 1 to 21 (MPLKHYLLLLVGCQAWGAGLA). An LRRNT domain is found at 22–53 (YHGCPSECTCSRASQVECTGARIVAVPTPLPW). Residues 22 to 538 (YHGCPSECTC…VWGMTQAQSG (517 aa)) are Extracellular-facing. 15 LRR repeats span residues 54–75 (NAMS…PFLN), 78–99 (ALIA…AFRN), 102–123 (SLRY…LFQG), 126–147 (SLES…HFSQ), 150–171 (NLKE…AFDH), 174–195 (GLTK…VFQH), 198–219 (NLQV…TFDG), 222–243 (NLQE…LFHN), 246–267 (NLQR…VFMQ), 270–291 (QLNR…IFGP), 294–315 (NLRE…VFSN), 318–339 (QLQV…AFNG), 342–363 (ELRE…VFRM), 366–387 (NLQN…IFAN), and 390–411 (GLMA…IFDH). An N-linked (GlcNAc...) asparagine glycan is attached at Asn-75. The N-linked (GlcNAc...) asparagine glycan is linked to Asn-369. Residues 423–475 (NPWRCDSDILPLRNWLLLNQPRLGTDTVPVCFSPANVRGQSLIIINVNVAVPS) enclose the LRRCT domain. The segment at 489–509 (WYPDTPSYPDTTSVSSTTELT) is disordered. A compositionally biased stretch (low complexity) spans 499–509 (TTSVSSTTELT). A helical transmembrane segment spans residues 539 to 559 (LAIAAIVIGIVALACSLAACV). At 560-581 (GCCCCKKRSQAVLMQMKAPNEC) the chain is on the cytoplasmic side.

In terms of assembly, (Microbial infection) Interacts with human coronavirus SARS-CoV-2 spike protein (via RBD domain); the interaction is direct and sequesters virions at the cell surface. As to quaternary structure, (Microbial infection) Interacts with human coronavirus SARS-CoV-2 spike protein (via RBD domain); the interaction is direct. In terms of tissue distribution, expressed in brain and placenta. Expressed in lung fibroblasts. Expressed in chodrocytes.

It is found in the cell membrane. Its function is as follows. (Microbial infection) Modulates the ability of SARS-CoV-2 to infect host cells through interaction with the spike protein. Does not act as a SARS-CoV-2 entry receptor but sequesters virions and antagonizes in trans SARS-CoV-2 infection of ACE2(+) cells when expressed on nearby cells. This is Leucine-rich repeat-containing protein 15 (LRRC15) from Homo sapiens (Human).